A 349-amino-acid chain; its full sequence is Histidinol-phosphate aminotransferase 1 (349 aa).

Lys213 carries the N6-(pyridoxal phosphate)lysine modification.

The protein belongs to the class-II pyridoxal-phosphate-dependent aminotransferase family. Histidinol-phosphate aminotransferase subfamily. In terms of assembly, homodimer. It depends on pyridoxal 5'-phosphate as a cofactor.

The enzyme catalyses L-histidinol phosphate + 2-oxoglutarate = 3-(imidazol-4-yl)-2-oxopropyl phosphate + L-glutamate. Its pathway is amino-acid biosynthesis; L-histidine biosynthesis; L-histidine from 5-phospho-alpha-D-ribose 1-diphosphate: step 7/9. The protein is Histidinol-phosphate aminotransferase 1 of Carboxydothermus hydrogenoformans (strain ATCC BAA-161 / DSM 6008 / Z-2901).